Reading from the N-terminus, the 338-residue chain is 4-hydroxythreonine-4-phosphate dehydrogenase (338 aa).

2 residues coordinate substrate: H139 and T140. A divalent metal cation-binding residues include H169, H214, and H270. Positions 278, 287, and 296 each coordinate substrate.

The protein belongs to the PdxA family. As to quaternary structure, homodimer. Zn(2+) serves as cofactor. The cofactor is Mg(2+). It depends on Co(2+) as a cofactor.

Its subcellular location is the cytoplasm. It carries out the reaction 4-(phosphooxy)-L-threonine + NAD(+) = 3-amino-2-oxopropyl phosphate + CO2 + NADH. It functions in the pathway cofactor biosynthesis; pyridoxine 5'-phosphate biosynthesis; pyridoxine 5'-phosphate from D-erythrose 4-phosphate: step 4/5. Functionally, catalyzes the NAD(P)-dependent oxidation of 4-(phosphooxy)-L-threonine (HTP) into 2-amino-3-oxo-4-(phosphooxy)butyric acid which spontaneously decarboxylates to form 3-amino-2-oxopropyl phosphate (AHAP). The chain is 4-hydroxythreonine-4-phosphate dehydrogenase from Desulfosudis oleivorans (strain DSM 6200 / JCM 39069 / Hxd3) (Desulfococcus oleovorans).